We begin with the raw amino-acid sequence, 697 residues long: MANKREFPLEKTRNIGIVAHIDAGKTTTTERILYYTGKIHKIGETHDGASQMDWMEQEQERGITITSAATTAQWKENRINIIDTPGHVDFTVEVERSLRVLDGAVVVLDAQSGVEPQTENVWRQATTYGVPRIVFVNKMDKIGANFDYSVSTIKDRLQANPLPVQMPIGAEDSFEGVIDLIEMKADLYDEDELGSKWDTVDVPDEYKEDAQARRDEMIEALADVNEDIMDKYLEGEEISNDEIRAAIRQATLNLDVFPVFAGSAFKNKGVQMMLDGVNDYLPSPLDVKPYKATDPETGEEIELKADDSAPFAGLAFKIATDPFVGRLTFFRVYRGTLEAGSYVLNATKGKRERVGRLLQMHSNHRNEIPEVFSGDIAAAIGLKNTTTGDSLTDPKTPLILESMEFPDPVIQVSVEPKSKADQDKMDVALQKLAEEDPTFKAETNPETGETLIAGMGELHLDIIVDRMKREFNVEATVGEPQVAYRETFTKQVSAQGKFVRQSGGKGQYGDVWIEFTPNEEGKGFEFEDAIVGGVVPREYIPSVEQGLKEAMQNGVLAGYPLIDVKAKLYDGSYHDVDSSEAAFKVAASLALRNAAPKGGAVILEPIMKVEIIAPEDNLGDVMGHVTARRGRVEGMEARGNAQVVNAFVPLAEMFGYATVLRSATQGRGTFTMTMDHYEPVPKSIQDEIIKKNGGNAE.

Residues 10-285 (EKTRNIGIVA…GVNDYLPSPL (276 aa)) enclose the tr-type G domain. GTP-binding positions include 19 to 26 (AHIDAGKT), 83 to 87 (DTPGH), and 137 to 140 (NKMD).

The protein belongs to the TRAFAC class translation factor GTPase superfamily. Classic translation factor GTPase family. EF-G/EF-2 subfamily.

The protein localises to the cytoplasm. In terms of biological role, catalyzes the GTP-dependent ribosomal translocation step during translation elongation. During this step, the ribosome changes from the pre-translocational (PRE) to the post-translocational (POST) state as the newly formed A-site-bound peptidyl-tRNA and P-site-bound deacylated tRNA move to the P and E sites, respectively. Catalyzes the coordinated movement of the two tRNA molecules, the mRNA and conformational changes in the ribosome. The protein is Elongation factor G of Ligilactobacillus salivarius (strain UCC118) (Lactobacillus salivarius).